The primary structure comprises 558 residues: Solute carrier family 22 member 6-A (558 aa).

The Cytoplasmic segment spans residues 1–15 (MSFAELLERTGGMGR). A helical membrane pass occupies residues 16 to 36 (FQITQVALMCFPILLMASHNL). Over 37-140 (LQNFSAAIPD…LVCGHKNRRQ (104 aa)) the chain is Extracellular. The helical transmembrane segment at 141–161 (LAQSVYMGGVLVGAIILGGLS) threads the bilayer. At 162–167 (DRYGRR) the chain is on the cytoplasmic side. The helical transmembrane segment at 168 to 188 (ALLIWSYFQMAVSGLCSAFSP) threads the bilayer. Over 189–197 (NYLSYCIFR) the chain is Extracellular. A helical membrane pass occupies residues 198–218 (FLTGMALSGIGLNTTALIVEW). Over 219–225 (VPTRVRT) the chain is Cytoplasmic. A helical membrane pass occupies residues 226–246 (ITGTLAGFSYTVGQLLLAGLA). The Extracellular portion of the chain corresponds to 247–253 (YAMRDWR). Residues 254–274 (WLQLCVSLPFFIFFLYSWWFP) form a helical membrane-spanning segment. At 275–342 (ESARWLVLSG…DLIRTSTIRR (68 aa)) the chain is on the cytoplasmic side. The chain crosses the membrane as a helical span at residues 343-363 (ISCALSLVWFSTSFAYYGLAM). The Extracellular segment spans residues 364-369 (DLQNFN). The helical transmembrane segment at 370-390 (VSIYLIQVIFGAVDFPAKIFS) threads the bilayer. The Cytoplasmic segment spans residues 391-400 (TTAMIYVGRK). The chain crosses the membrane as a helical span at residues 401-421 (FTQLMSLILGGVVILANSFVP). Residues 422–428 (HEMQTVR) are Extracellular-facing. The chain crosses the membrane as a helical span at residues 429–449 (TGMAVFGKGCLAASFSCVFLY). The Cytoplasmic segment spans residues 450-462 (TTELYPTVIRQSG). A helical membrane pass occupies residues 463–483 (LGLCSTMARIGGIVAPLVKIL). Over 484–488 (GEYYP) the chain is Extracellular. A helical transmembrane segment spans residues 489 to 509 (FLPLVIYGGAPIISGLCVFFL). The Cytoplasmic segment spans residues 510 to 558 (PETVNKPLPDTIEEVEKRIKAPKKENEMNEIVSLKKKEGMKENPVNDVL). Basic and acidic residues predominate over residues 539–550 (EIVSLKKKEGMK). The interval 539–558 (EIVSLKKKEGMKENPVNDVL) is disordered.

This sequence belongs to the major facilitator (TC 2.A.1) superfamily. Organic cation transporter (TC 2.A.1.19) family. Glycosylated. Glycosylation is necessary for proper targeting of the transporter to the plasma membrane.

It localises to the cell membrane. The protein resides in the basolateral cell membrane. The protein localises to the basal cell membrane. In terms of biological role, involved in the renal elimination of endogenous and exogenous organic anions. Mediates the sodium-independent uptake of p-aminohippurate (PAH), 2,3-dimercapto-1-propanesulfonic acid (DMPS), cidofovir, adefovir, 9-(2-phosphonylmethoxyethyl) guanine (PMEG), 9-(2-phosphonylmethoxyethyl) diaminopurine (PMEDAP), ochratoxin (OTA), acyclovir (ACV), 3'-azido-3-'deoxythymidine (AZT), cimetidine (CMD), 2,4-dichloro-phenoxyacetate (2,4-D), hippurate (HA), indoleacetate (IA), indoxyl sulfate (IS) and 3-carboxy-4-methyl-5-propyl-2-furanpropionate (CMPF) and edaravone sulfate. PAH uptake is inhibited by p-chloromercuribenzenesulphonate (PCMBS), diethyl pyrocarbonate (DEPC), indomethacin, sulindac, diclofenac, carprofen, okadaic acid, benzothiazolylcysteine (BTC), S-chlorotrifluoroethylcysteine (CTFC), cysteine S-conjugates S-dichlorovinylcysteine (DCVC), furosemide, steviol, phorbol 12-myristate 13-acetate (PMA), calcium ionophore A23187, benzylpenicillin, bumetamide, losartan, probenecid, phenol red, urate, glutarate and alpha-ketoglutarate. The chain is Solute carrier family 22 member 6-A (slc22a6-a) from Xenopus laevis (African clawed frog).